The primary structure comprises 270 residues: MRIALGIQYDGAAFCGWQAQPHGNTVQDALERALAEFARVPLHTTVAGRTDTGVHGLGQVVHFDTELDRADFSWVRGTNAFLPPTVAVQWAKSMPDAFHARFSAFERTYYYALYVHPVRSPMLDGRAGWIHTPLDDDAMRAAAAHLLGEHDFSAFRSSECQSKTPVKHLYEIDIRRVGHFLHFRFRANAFLHHMVRNLMGCLVAVGRGRYPADWVADVLAGRDRNRAAPTFMADGLYLAHVGYPAEFAVPPAQLGSVPWSSVWADLDPQP.

D51 serves as the catalytic Nucleophile. Y109 contacts substrate.

The protein belongs to the tRNA pseudouridine synthase TruA family. In terms of assembly, homodimer.

The enzyme catalyses uridine(38/39/40) in tRNA = pseudouridine(38/39/40) in tRNA. In terms of biological role, formation of pseudouridine at positions 38, 39 and 40 in the anticodon stem and loop of transfer RNAs. The polypeptide is tRNA pseudouridine synthase A (Burkholderia multivorans (strain ATCC 17616 / 249)).